Here is a 109-residue protein sequence, read N- to C-terminus: UPF0122 protein CLH_1195 (109 aa).

It belongs to the UPF0122 family.

Might take part in the signal recognition particle (SRP) pathway. This is inferred from the conservation of its genetic proximity to ftsY/ffh. May be a regulatory protein. This Clostridium botulinum (strain Alaska E43 / Type E3) protein is UPF0122 protein CLH_1195.